A 772-amino-acid polypeptide reads, in one-letter code: Carnitine O-palmitoyltransferase 1, muscle isoform (772 aa).

Residues 1–47 lie on the Cytoplasmic side of the membrane; sequence MAEAHQAVAFQFTVTPDGVDFRLSREALKHVYLSGINSWKKRLIRIK. Residues 48 to 73 traverse the membrane as a helical segment; the sequence is NGILRGVYPGSPTSWLVVIMATVGSS. Residues 74-102 are Mitochondrial intermembrane-facing; the sequence is FCNVDISLGLVSCIQRCLPQGCGPYQTPQ. Residues 103–122 form a helical membrane-spanning segment; the sequence is TRALLSMAIFSTGVWVTGIF. At 123–772 the chain is on the cytoplasmic side; sequence FFRQTLKLLL…DLFQVPKAYS (650 aa). His-473 acts as the Proton acceptor in catalysis. A CoA-binding site is contributed by 555–567; that stretch reads GKGLIKKCRTSPD. Positions 589 and 602 each coordinate (R)-carnitine.

This sequence belongs to the carnitine/choline acetyltransferase family. Strong expression in heart and skeletal muscle. No expression in liver and kidney.

It is found in the mitochondrion outer membrane. It carries out the reaction (R)-carnitine + hexadecanoyl-CoA = O-hexadecanoyl-(R)-carnitine + CoA. The protein operates within lipid metabolism; fatty acid beta-oxidation. Functionally, catalyzes the transfer of the acyl group of long-chain fatty acid-CoA conjugates onto carnitine, an essential step for the mitochondrial uptake of long-chain fatty acids and their subsequent beta-oxidation in the mitochondrion. This is Carnitine O-palmitoyltransferase 1, muscle isoform (CPT1B) from Homo sapiens (Human).